Here is a 567-residue protein sequence, read N- to C-terminus: Geranylgeranyl transferase type-2 subunit alpha (567 aa).

PFTA repeat units lie at residues 44–78 (LDESVLELTSQILGANPDFATLWNCRREVLQQLEV), 88–122 (LVKAELGFLESCLRVNPKSYGTWHHRCWLLSRLPE), 124–158 (NWARELELCARFLEVDERNFHCWDYRRFVAAQAAV), 159–193 (PPAEELAFTDSLITRNFSNYSSWHYRSCLLPQLHP), 207–241 (VLLKELELVQNAFFTDPNDQSAWFYHRWLLGRADP), and 363–397 (VLQSELESCKELQELEPENKWCLLTIILLMRALDP). Ser98 carries the phosphoserine modification. 5 LRR repeats span residues 442 to 463 (EVRVLHLGHKDLTVLCHLEQLL), 464 to 486 (LVTHLDLSHNRLRALPPALAALR), 487 to 508 (CLEVLQANDNAIESLDGVTNLP), 509 to 530 (RLQELILCNNRLQQPAVLQPLT), and 534 to 555 (RLTLLNLQGNPLCQAEGSSEHL).

The protein belongs to the protein prenyltransferase subunit alpha family. Heterotrimer composed of RABGGTA, RABGGTB and CHM; within this trimer, RABGGTA and RABGGTB form the catalytic component B, while CHM (component A) mediates peptide substrate binding. The Rab GGTase dimer (RGGT) interacts with CHM (component A) prior to Rab protein binding; the association is stabilized by geranylgeranyl pyrophosphate (GGpp). The CHM:RGGT:Rab complex is destabilized by GGpp. Interacts with non-phosphorylated form of RAB8A; phosphorylation of RAB8A at 'Thr-72' disrupts this interaction.

It carries out the reaction geranylgeranyl diphosphate + L-cysteinyl-[protein] = S-geranylgeranyl-L-cysteinyl-[protein] + diphosphate. The enzymatic reaction requires the aid of a Rab escort protein (also called component A), such as CHM. Its function is as follows. Catalyzes the transfer of a geranylgeranyl moiety from geranylgeranyl diphosphate to both cysteines of Rab proteins with the C-terminal sequence -XXCC, -XCXC and -CCXX, such as RAB1A, RAB3A, RAB5A and RAB7A. The polypeptide is Geranylgeranyl transferase type-2 subunit alpha (RABGGTA) (Bos taurus (Bovine)).